A 391-amino-acid chain; its full sequence is mRNA-capping enzyme subunit alpha (391 aa).

Catalysis depends on Lys63, which acts as the N6-GMP-lysine intermediate. A disordered region spans residues 363-391 (KERNRRPRDEDRKRVGGDDHDHGAKRARQ).

Belongs to the eukaryotic GTase family. In terms of assembly, heterodimer. The mRNA-capping enzyme is composed of two separate chains alpha and beta, respectively a mRNA guanylyltransferase and an mRNA 5'-triphosphate monophosphatase.

Its subcellular location is the nucleus. It carries out the reaction a 5'-end diphospho-ribonucleoside in mRNA + GTP + H(+) = a 5'-end (5'-triphosphoguanosine)-ribonucleoside in mRNA + diphosphate. In terms of biological role, second step of mRNA capping. Transfer of the GMP moiety of GTP to the 5'-end of RNA via an enzyme-GMP covalent reaction intermediate. This Yarrowia lipolytica (strain CLIB 122 / E 150) (Yeast) protein is mRNA-capping enzyme subunit alpha (CEG1).